Reading from the N-terminus, the 95-residue chain is MTSPVNVDVKLGVNKFNVDEEHPHIVVKADADKQVLELLVKACPAGLYKKQDDGSVRFDYAGCLECGTCRILGLGSALEQWEYPRGTFGVEFRYG.

This sequence belongs to the bacterial-type ferredoxin family. FixX subfamily.

Its function is as follows. Could be part of an electron transfer system required for anaerobic carnitine reduction. Could be a 3Fe-4S cluster-containing protein. This is Ferredoxin-like protein FixX (fixX) from Shigella flexneri.